The primary structure comprises 188 residues: Large ribosomal subunit protein bL35m (188 aa).

This sequence belongs to the bacterial ribosomal protein bL35 family.

Its subcellular location is the mitochondrion. This Pongo abelii (Sumatran orangutan) protein is Large ribosomal subunit protein bL35m (MRPL35).